The following is a 132-amino-acid chain: D-ribose pyranase (132 aa).

His20 (proton donor) is an active-site residue. Residues Asp28, His99, and Tyr121–Asn123 contribute to the substrate site.

The protein belongs to the RbsD / FucU family. RbsD subfamily. Homodecamer.

It is found in the cytoplasm. The enzyme catalyses beta-D-ribopyranose = beta-D-ribofuranose. It participates in carbohydrate metabolism; D-ribose degradation; D-ribose 5-phosphate from beta-D-ribopyranose: step 1/2. Its function is as follows. Catalyzes the interconversion of beta-pyran and beta-furan forms of D-ribose. The sequence is that of D-ribose pyranase from Variovorax paradoxus (strain S110).